Reading from the N-terminus, the 563-residue chain is DNA repair protein rhp7 (563 aa).

The disordered stretch occupies residues M1–D101. The span at E39 to E59 shows a compositional bias: polar residues. Residues V78–K90 show a composition bias toward basic residues.

The protein belongs to the RAD7 family.

It localises to the nucleus. Its function is as follows. Involved in global genome repair (GGR) via nucleotide excision repair (NER), in conjunction with rhp16, after UV irradiation. This is DNA repair protein rhp7 (rhp7) from Schizosaccharomyces pombe (strain 972 / ATCC 24843) (Fission yeast).